Reading from the N-terminus, the 67-residue chain is Small ribosomal subunit protein eS31 (67 aa).

Residues C35, C38, C54, and C57 each coordinate Zn(2+). A C4-type zinc finger spans residues 35–57 (CPRCGSIMAHHMKPLERWACGKC).

Belongs to the eukaryotic ribosomal protein eS31 family. In terms of assembly, part of the 30S ribosomal subunit. It depends on Zn(2+) as a cofactor.

This Sulfolobus acidocaldarius (strain ATCC 33909 / DSM 639 / JCM 8929 / NBRC 15157 / NCIMB 11770) protein is Small ribosomal subunit protein eS31.